We begin with the raw amino-acid sequence, 248 residues long: Probable transcriptional regulatory protein M446_6579 (248 aa).

This sequence belongs to the TACO1 family.

It localises to the cytoplasm. This is Probable transcriptional regulatory protein M446_6579 from Methylobacterium sp. (strain 4-46).